The sequence spans 466 residues: Asparagine--tRNA ligase (466 aa).

It belongs to the class-II aminoacyl-tRNA synthetase family. In terms of assembly, homodimer.

It is found in the cytoplasm. The enzyme catalyses tRNA(Asn) + L-asparagine + ATP = L-asparaginyl-tRNA(Asn) + AMP + diphosphate + H(+). This Photobacterium profundum (strain SS9) protein is Asparagine--tRNA ligase.